The sequence spans 560 residues: Eukaryotic translation initiation factor 3 subunit D-1 (560 aa).

The interval 98-166 is disordered; it reads VQKPPHQRGR…RGPPPKMRES (69 aa). Basic residues predominate over residues 100-121; that stretch reads KPPHQRGRFRNMRNSRSGRGRN. The residue at position 128 (Thr-128) is a Phosphothreonine. The span at 147-156 shows a compositional bias: basic residues; it reads GRGMGKKFGH. Positions 291–305 are RNA gate; it reads EFDLLTVNESSVEPP.

It belongs to the eIF-3 subunit D family. As to quaternary structure, component of the eukaryotic translation initiation factor 3 (eIF-3) complex. The eIF-3 complex interacts with pix.

The protein localises to the cytoplasm. Its function is as follows. mRNA cap-binding component of the eukaryotic translation initiation factor 3 (eIF-3) complex, which is involved in protein synthesis of a specialized repertoire of mRNAs and, together with other initiation factors, stimulates binding of mRNA and methionyl-tRNAi to the 40S ribosome. The eIF-3 complex specifically targets and initiates translation of a subset of mRNAs involved in cell proliferation. In the eIF-3 complex, eif3d specifically recognizes and binds the 7-methylguanosine cap of a subset of mRNAs. The sequence is that of Eukaryotic translation initiation factor 3 subunit D-1 from Drosophila yakuba (Fruit fly).